The sequence spans 71 residues: Large ribosomal subunit protein uL29 (71 aa).

It belongs to the universal ribosomal protein uL29 family.

This Synechococcus sp. (strain RCC307) protein is Large ribosomal subunit protein uL29.